The sequence spans 419 residues: GTPase Obg (419 aa).

Positions 1 to 156 (MRFVDYVSIE…FYLDLQLKVM (156 aa)) constitute an Obg domain. Residues 157–334 (ADIGLVGKPN…LGENQKKLEI (178 aa)) form the OBG-type G domain. Residues 163–170 (GKPNAGKS), 188–192 (FTTLV), 209–212 (DLPG), 278–281 (NKCD), and 315–317 (NII) each bind GTP. Mg(2+)-binding residues include S170 and T190. Residues 342 to 419 (IEFNLKAPFL…RIYEFEFHWN (78 aa)) enclose the OCT domain.

This sequence belongs to the TRAFAC class OBG-HflX-like GTPase superfamily. OBG GTPase family. As to quaternary structure, monomer. The cofactor is Mg(2+).

The protein resides in the cytoplasm. Functionally, an essential GTPase which binds GTP, GDP and possibly (p)ppGpp with moderate affinity, with high nucleotide exchange rates and a fairly low GTP hydrolysis rate. Plays a role in control of the cell cycle, stress response, ribosome biogenesis and in those bacteria that undergo differentiation, in morphogenesis control. In Mesomycoplasma hyopneumoniae (strain 7448) (Mycoplasma hyopneumoniae), this protein is GTPase Obg.